A 65-amino-acid polypeptide reads, in one-letter code: Large ribosomal subunit protein bL32 (65 aa).

Over residues 1 to 19 (MAVQKSRKTPSKRGMRRSH) the composition is skewed to basic residues. Residues 1–32 (MAVQKSRKTPSKRGMRRSHNALVKSTLSEDQE) are disordered.

This sequence belongs to the bacterial ribosomal protein bL32 family.

In Vesicomyosocius okutanii subsp. Calyptogena okutanii (strain HA), this protein is Large ribosomal subunit protein bL32.